The chain runs to 526 residues: Lysine--tRNA ligase (526 aa).

The short motif at 30–38 (PSGYVHIGN) is the 'HIGH' region element. 6 residues coordinate Zn(2+): aspartate 95, cysteine 99, histidine 100, histidine 106, cysteine 177, and cysteine 199. The 'KMSKS' region signature appears at 280 to 284 (KMSGS).

The protein belongs to the class-I aminoacyl-tRNA synthetase family. The cofactor is Zn(2+).

The protein localises to the cytoplasm. It catalyses the reaction tRNA(Lys) + L-lysine + ATP = L-lysyl-tRNA(Lys) + AMP + diphosphate. The polypeptide is Lysine--tRNA ligase (lysS) (Thermococcus kodakarensis (strain ATCC BAA-918 / JCM 12380 / KOD1) (Pyrococcus kodakaraensis (strain KOD1))).